Reading from the N-terminus, the 247-residue chain is ATP synthase subunit a, chloroplastic (247 aa).

The next 5 helical transmembrane spans lie at 38-58 (QVLI…IIAV), 95-115 (VPFI…GALL), 134-154 (INTT…AGLT), 199-219 (LVVV…VMFL), and 220-240 (GLFT…AYIG).

The protein belongs to the ATPase A chain family. F-type ATPases have 2 components, CF(1) - the catalytic core - and CF(0) - the membrane proton channel. CF(1) has five subunits: alpha(3), beta(3), gamma(1), delta(1), epsilon(1). CF(0) has four main subunits: a, b, b' and c.

Its subcellular location is the plastid. The protein resides in the chloroplast thylakoid membrane. Its function is as follows. Key component of the proton channel; it plays a direct role in the translocation of protons across the membrane. The polypeptide is ATP synthase subunit a, chloroplastic (Carica papaya (Papaya)).